A 359-amino-acid chain; its full sequence is 4-hydroxy-3-methylbut-2-en-1-yl diphosphate synthase (flavodoxin) (359 aa).

[4Fe-4S] cluster contacts are provided by C264, C267, C299, and E306.

It belongs to the IspG family. [4Fe-4S] cluster is required as a cofactor.

The enzyme catalyses (2E)-4-hydroxy-3-methylbut-2-enyl diphosphate + oxidized [flavodoxin] + H2O + 2 H(+) = 2-C-methyl-D-erythritol 2,4-cyclic diphosphate + reduced [flavodoxin]. It functions in the pathway isoprenoid biosynthesis; isopentenyl diphosphate biosynthesis via DXP pathway; isopentenyl diphosphate from 1-deoxy-D-xylulose 5-phosphate: step 5/6. Its function is as follows. Converts 2C-methyl-D-erythritol 2,4-cyclodiphosphate (ME-2,4cPP) into 1-hydroxy-2-methyl-2-(E)-butenyl 4-diphosphate. This chain is 4-hydroxy-3-methylbut-2-en-1-yl diphosphate synthase (flavodoxin), found in Helicobacter pylori (strain P12).